The sequence spans 213 residues: NADH dehydrogenase [ubiquinone] iron-sulfur protein 7, mitochondrial (213 aa).

The N-terminal 37 residues, 1–37, are a transit peptide targeting the mitochondrion; sequence MAVLSAPGLRGFRILGLRSSVGPAVQARSVHQSVATD. Residues 30 to 44 are compositionally biased toward polar residues; the sequence is VHQSVATDGPSSTQP. The tract at residues 30–53 is disordered; sequence VHQSVATDGPSSTQPALPKARAVA. Residues Cys-88 and Cys-89 each coordinate [4Fe-4S] cluster. Arg-111 bears the Hydroxyarginine mark. 2 residues coordinate [4Fe-4S] cluster: Cys-153 and Cys-183.

The protein belongs to the complex I 20 kDa subunit family. Core subunit of respiratory chain NADH dehydrogenase (Complex I) which is composed of 45 different subunits. This is a component of the iron-sulfur (IP) fragment of the enzyme. It depends on [4Fe-4S] cluster as a cofactor. Hydroxylated ar Arg-111 by NDUFAF5 early in the pathway of assembly of complex I, before the formation of the juncture between peripheral and membrane arms.

It is found in the mitochondrion inner membrane. The catalysed reaction is a ubiquinone + NADH + 5 H(+)(in) = a ubiquinol + NAD(+) + 4 H(+)(out). In terms of biological role, core subunit of the mitochondrial membrane respiratory chain NADH dehydrogenase (Complex I) which catalyzes electron transfer from NADH through the respiratory chain, using ubiquinone as an electron acceptor. Essential for the catalytic activity of complex I. The protein is NADH dehydrogenase [ubiquinone] iron-sulfur protein 7, mitochondrial (NDUFS7) of Pan troglodytes (Chimpanzee).